The chain runs to 203 residues: NAD(P)H-quinone oxidoreductase subunit M, chloroplastic (203 aa).

A chloroplast-targeting transit peptide spans 1 to 21 (MAASSSYMACAKFSMLGWLGG). The segment covering 34-48 (SPQEQAEVQESQEVN) has biased composition (low complexity). A disordered region spans residues 34–61 (SPQEQAEVQESQEVNAQEEEKVKQPVQP).

It belongs to the NDH complex subunit M family. In terms of assembly, part of the chloroplast NDH complex, composed of a mixture of chloroplast and nucleus encoded subunits. Component of the NDH subcomplex A, at least composed of ndhH, ndhI, ndhJ, ndhK, ndhL, ndhM, ndhN and ndhO.

It localises to the plastid. The protein localises to the chloroplast thylakoid membrane. It carries out the reaction a plastoquinone + NADH + (n+1) H(+)(in) = a plastoquinol + NAD(+) + n H(+)(out). The enzyme catalyses a plastoquinone + NADPH + (n+1) H(+)(in) = a plastoquinol + NADP(+) + n H(+)(out). Functionally, NDH shuttles electrons from NAD(P)H:plastoquinone, via FMN and iron-sulfur (Fe-S) centers, to quinones in the photosynthetic chain and possibly in a chloroplast respiratory chain. The immediate electron acceptor for the enzyme in this species is believed to be plastoquinone. Couples the redox reaction to proton translocation, and thus conserves the redox energy in a proton gradient. The sequence is that of NAD(P)H-quinone oxidoreductase subunit M, chloroplastic from Populus jackii (Balm of Gilead).